The following is a 103-amino-acid chain: Matrix Gla protein (103 aa).

A signal peptide spans 1–19 (MRSLLLLTVLAALVVAILC). Glu21 carries the 4-carboxyglutamate modification. Phosphoserine occurs at positions 22, 25, and 28. The Gla domain maps to 51-97 (MAKAQERVREQRKPAYELNREACDDYKLCERYAMVYGYNAAYNRYFR). A 4-carboxyglutamate mark is found at Glu56, Glu60, Glu67, and Glu71. Cys73 and Cys79 are disulfide-bonded.

The protein belongs to the osteocalcin/matrix Gla protein family. Post-translationally, requires vitamin K-dependent gamma-carboxylation for its function.

Its subcellular location is the secreted. Associates with the organic matrix of bone and cartilage. Thought to act as an inhibitor of bone formation. In Oryctolagus cuniculus (Rabbit), this protein is Matrix Gla protein (MGP).